A 413-amino-acid chain; its full sequence is Transcription factor bHLH23 (413 aa).

Positions 40-75 (SSQTQTPSCDPPLILRGSGSGDGEGNGPLPQPPPPL) are disordered. Position 186 is a phosphothreonine (threonine 186). Residue serine 191 is modified to Phosphoserine. Disordered regions lie at residues 232–278 (TEPV…RSRA) and 391–413 (ETEQ…KMFS). Basic and acidic residues predominate over residues 246–257 (TDERKRKTREET). Positions 277–326 (RAAIMHKLSERRRRQKINEMMKALQELLPRCTKTDRSSMLDDVIEYVKSL) constitute a bHLH domain.

As to quaternary structure, homodimer. As to expression, expressed constitutively in leaves, stems, and flowers.

It is found in the nucleus. In Arabidopsis thaliana (Mouse-ear cress), this protein is Transcription factor bHLH23 (BHLH23).